A 1385-amino-acid polypeptide reads, in one-letter code: Probable serine/threonine-protein kinase DDB_G0268876 (1385 aa).

The Protein kinase domain occupies 758–1008 (LELTKEIGRG…QQIITYLENL (251 aa)). ATP-binding positions include 764–772 (IGRGVSGVV) and Lys785. Asp878 serves as the catalytic Proton acceptor. Disordered regions lie at residues 1040 to 1074 (GGNS…ENKI), 1091 to 1266 (EVSK…SVGG), and 1287 to 1339 (ISSS…NNNN). Positions 1055–1073 (VSGSNNNESSTAVSLNENK) are enriched in polar residues. Residues 1107 to 1144 (SSSTSSSPSTLSAPQSPVGSTSPMGSTSTSPISNNNNR) show a composition bias toward low complexity. A compositionally biased stretch (basic and acidic residues) spans 1145–1162 (PTHDHQQPHQVKWERIVP). Low complexity-rich tracts occupy residues 1189–1232 (NNNN…SSGI), 1242–1266 (FLSS…SVGG), and 1295–1339 (NNNN…NNNN).

The protein belongs to the protein kinase superfamily. TKL Ser/Thr protein kinase family.

It catalyses the reaction L-seryl-[protein] + ATP = O-phospho-L-seryl-[protein] + ADP + H(+). The catalysed reaction is L-threonyl-[protein] + ATP = O-phospho-L-threonyl-[protein] + ADP + H(+). This Dictyostelium discoideum (Social amoeba) protein is Probable serine/threonine-protein kinase DDB_G0268876.